The chain runs to 403 residues: UPF0284 protein PMT_1350 (403 aa).

The protein belongs to the UPF0284 family.

This is UPF0284 protein PMT_1350 from Prochlorococcus marinus (strain MIT 9313).